The chain runs to 330 residues: Malate dehydrogenase (330 aa).

Position 12 to 18 (12 to 18) interacts with NAD(+); it reads GAAGQIG. Substrate-binding residues include R93 and R99. Residues N106, Q113, and 130–132 each bind NAD(+); that span reads VGN. N132 and R163 together coordinate substrate. The active-site Proton acceptor is H188.

It belongs to the LDH/MDH superfamily. MDH type 2 family.

The catalysed reaction is (S)-malate + NAD(+) = oxaloacetate + NADH + H(+). Catalyzes the reversible oxidation of malate to oxaloacetate. This Legionella pneumophila (strain Lens) protein is Malate dehydrogenase.